Reading from the N-terminus, the 382-residue chain is Gap junction alpha-1 protein (382 aa).

Over 2 to 23 (GDWSALGKLLDKVQAYSTAGGK) the chain is Cytoplasmic. Serine 5 is modified (phosphoserine). The helical transmembrane segment at 24 to 44 (VWLSVLFIFRILLLGTAVESA) threads the bilayer. Residues 45–76 (WGDEQSAFRCNTQQPGCENVCYDKSFPISHVR) are Extracellular-facing. 2 cysteine pairs are disulfide-bonded: cysteine 54/cysteine 192 and cysteine 187/cysteine 198. The chain crosses the membrane as a helical span at residues 77 to 97 (FWVLQIIFVSVPTLLYLAHVF). At 98-155 (YVMRKEEKLNKKEEELKVAQTDGVNVEMHLKQIEIKKFKYGIEEHGKVKMRGGLLRTY) the chain is on the cytoplasmic side. Lysine 144 is covalently cross-linked (Glycyl lysine isopeptide (Lys-Gly) (interchain with G-Cter in SUMO)). The chain crosses the membrane as a helical span at residues 156–176 (IISILFKSVFEVAFLLIQWYI). The Extracellular segment spans residues 177 to 207 (YGFSLSAVYTCKRDPCPHQVDCFLSRPTEKT). A helical membrane pass occupies residues 208–228 (IFIIFMLVVSLVSLALNIIEL). At 229-382 (FYVFFKGVKD…SRPRPDDLEI (154 aa)) the chain is on the cytoplasmic side. Lysine 237 participates in a covalent cross-link: Glycyl lysine isopeptide (Lys-Gly) (interchain with G-Cter in SUMO). Residues 244–382 (SDPYHATTGP…SRPRPDDLEI (139 aa)) form an interaction with NOV region. Tyrosine 247 bears the Phosphotyrosine mark. Serine 255, serine 257, and serine 262 each carry phosphoserine. Residues 264 to 382 (KYAYFNGCSS…SRPRPDDLEI (119 aa)) form an interaction with UBQLN4 region. S-nitrosocysteine is present on cysteine 271. Threonine 275 bears the Phosphothreonine mark. A phosphoserine mark is found at serine 306, serine 314, and serine 325. Positions 317-332 (QNRMGQAGSTISNSHA) are enriched in polar residues. Residues 317-382 (QNRMGQAGST…SRPRPDDLEI (66 aa)) are disordered. Phosphothreonine is present on threonine 326. Phosphoserine occurs at positions 328, 330, 341, and 365. Residues 362-374 (RPSSRASSRASSR) show a composition bias toward low complexity. Serine 368 is subject to Phosphoserine; by PKC/PRKCG and PKC/PRKCD. A phosphoserine mark is found at serine 369 and serine 373.

The protein belongs to the connexin family. Alpha-type (group II) subfamily. As to quaternary structure, a connexon is composed of a hexamer of connexins. Interacts with CSNK1D. Interacts with RIC1/CIP150. Interacts (via C-terminus) with TJP1. Interacts (via C-terminus) with SRC (via SH3 domain). Interacts (not ubiquitinated) with UBQLN4 (via UBA domain). Interacts with CNST. Interacts with SGSM3. Interacts with NOV. Interacts with TMEM65. Interacts with ANK3/ANKG and PKP2. In terms of processing, phosphorylation at Ser-325, Ser-328 and Ser-330 by CK1 modulates gap junction assembly. Phosphorylated at Ser-368 by PRKCG; phosphorylation induces disassembly of gap junction plaques and inhibition of gap junction activity. Phosphorylation at Ser-368 by PRKCD triggers its internalization into small vesicles leading to proteasome-mediated degradation. Post-translationally, sumoylated with SUMO1, SUMO2 and SUMO3, which may regulate the level of functional Cx43 gap junctions at the plasma membrane. May be desumoylated by SENP1 or SENP2. Acetylated in the developing cortex; leading to delocalization from the cell membrane. In terms of processing, S-nitrosylation at Cys-271 is enriched at the muscle endothelial gap junction in arteries, it augments channel permeability and may regulate of smooth muscle cell to endothelial cell communication. Expressed in heart, non-sensory epithelial cells, and in fibrocytes of the spiral ligament and the spiral limbus. Expressed in bladder smooth muscle cells (at protein level). Expressed in astrocytes (at protein level).

The protein resides in the cell membrane. It is found in the cell junction. The protein localises to the gap junction. Its subcellular location is the endoplasmic reticulum. Its function is as follows. Gap junction protein that acts as a regulator of bladder capacity. A gap junction consists of a cluster of closely packed pairs of transmembrane channels, the connexons, through which materials of low MW diffuse from one cell to a neighboring cell. Negative regulator of bladder functional capacity: acts by enhancing intercellular electrical and chemical transmission, thus sensitizing bladder muscles to cholinergic neural stimuli and causing them to contract. May play a role in cell growth inhibition through the regulation of NOV expression and localization. Plays an essential role in gap junction communication in the ventricles. Connexin 43 is possibly the ATP-induced pore of mouse macrophages. The sequence is that of Gap junction alpha-1 protein (Gja1) from Mus musculus (Mouse).